The sequence spans 292 residues: Aspartate carbamoyltransferase catalytic subunit (292 aa).

Residues Arg49 and Thr50 each coordinate carbamoyl phosphate. Residue Lys77 participates in L-aspartate binding. The carbamoyl phosphate site is built by Arg99, His127, and Gln130. Residues Arg161 and Arg211 each coordinate L-aspartate. Carbamoyl phosphate contacts are provided by Gly250 and Pro251.

This sequence belongs to the aspartate/ornithine carbamoyltransferase superfamily. ATCase family. In terms of assembly, heterododecamer (2C3:3R2) of six catalytic PyrB chains organized as two trimers (C3), and six regulatory PyrI chains organized as three dimers (R2).

It catalyses the reaction carbamoyl phosphate + L-aspartate = N-carbamoyl-L-aspartate + phosphate + H(+). It functions in the pathway pyrimidine metabolism; UMP biosynthesis via de novo pathway; (S)-dihydroorotate from bicarbonate: step 2/3. Catalyzes the condensation of carbamoyl phosphate and aspartate to form carbamoyl aspartate and inorganic phosphate, the committed step in the de novo pyrimidine nucleotide biosynthesis pathway. This Campylobacter lari (strain RM2100 / D67 / ATCC BAA-1060) protein is Aspartate carbamoyltransferase catalytic subunit.